The primary structure comprises 396 residues: Glyceraldehyde-3-phosphate dehydrogenase GAPA1, chloroplastic (396 aa).

Residues 1–60 constitute a chloroplast transit peptide; the sequence is MASVTFSVPKGFTEFSGLRSSSASLPFGKKLSSDEFVSIVSFQTSAMGSSGGYRKGVTEA. Residues 71–72, Asp95, and Arg140 each bind NADP(+); that span reads RI. D-glyceraldehyde 3-phosphate contacts are provided by residues 212–214, Thr243, Arg258, 271–272, and Arg294; these read SCT and TG. The active-site Nucleophile is Cys213. Asn376 lines the NADP(+) pocket.

This sequence belongs to the glyceraldehyde-3-phosphate dehydrogenase family. Tetramer of either four A chains (GAPDH 2) or two A and two B chains (GAPDH 1). Expressed in leaves and stems.

The protein resides in the plastid. It is found in the chloroplast membrane. The protein localises to the chloroplast stroma. The enzyme catalyses D-glyceraldehyde 3-phosphate + phosphate + NADP(+) = (2R)-3-phospho-glyceroyl phosphate + NADPH + H(+). It functions in the pathway carbohydrate biosynthesis; Calvin cycle. Involved in the photosynthetic reductive pentose phosphate pathway (Calvin-Benson cycle). Catalyzes the reduction of 1,3-diphosphoglycerate by NADPH. This chain is Glyceraldehyde-3-phosphate dehydrogenase GAPA1, chloroplastic (GAPA1), found in Arabidopsis thaliana (Mouse-ear cress).